We begin with the raw amino-acid sequence, 401 residues long: Chalcone synthase 3 (401 aa).

Cys168 is an active-site residue.

This sequence belongs to the thiolase-like superfamily. Chalcone/stilbene synthases family.

It carries out the reaction (E)-4-coumaroyl-CoA + 3 malonyl-CoA + 3 H(+) = 2',4,4',6'-tetrahydroxychalcone + 3 CO2 + 4 CoA. It functions in the pathway secondary metabolite biosynthesis; flavonoid biosynthesis. Functionally, the primary product of this enzyme is 4,2',4',6'-tetrahydroxychalcone (also termed naringenin-chalcone or chalcone) which can under specific conditions spontaneously isomerize into naringenin. This chain is Chalcone synthase 3 (CHS3), found in Sorghum bicolor (Sorghum).